Consider the following 247-residue polypeptide: Coproheme decarboxylase (247 aa).

Fe-coproporphyrin III is bound by residues Arg129, 143–147 (YPMDK), His170, Gln183, and Ser221. Residue Tyr143 is part of the active site.

It belongs to the ChdC family. Type 1 subfamily. It depends on Fe-coproporphyrin III as a cofactor.

The catalysed reaction is Fe-coproporphyrin III + 2 H2O2 + 2 H(+) = heme b + 2 CO2 + 4 H2O. The enzyme catalyses Fe-coproporphyrin III + H2O2 + H(+) = harderoheme III + CO2 + 2 H2O. It catalyses the reaction harderoheme III + H2O2 + H(+) = heme b + CO2 + 2 H2O. The protein operates within porphyrin-containing compound metabolism; protoheme biosynthesis. In terms of biological role, involved in coproporphyrin-dependent heme b biosynthesis. Catalyzes the decarboxylation of Fe-coproporphyrin III (coproheme) to heme b (protoheme IX), the last step of the pathway. The reaction occurs in a stepwise manner with a three-propionate intermediate. The chain is Coproheme decarboxylase from Bacillus anthracis.